A 382-amino-acid chain; its full sequence is Pyrimidine monooxygenase RutA (382 aa).

Residues 68-69 (IK), Asn-134, Glu-143, 159-160 (RY), and Ser-209 each bind FMN.

Belongs to the NtaA/SnaA/DszA monooxygenase family. RutA subfamily.

The catalysed reaction is uracil + FMNH2 + NADH + O2 = (Z)-3-ureidoacrylate + FMN + NAD(+) + H2O + H(+). It catalyses the reaction thymine + FMNH2 + NADH + O2 = (Z)-2-methylureidoacrylate + FMN + NAD(+) + H2O + H(+). Catalyzes the pyrimidine ring opening between N-3 and C-4 by an unusual flavin hydroperoxide-catalyzed mechanism, adding oxygen atoms in the process to yield ureidoacrylate peracid, that immediately reacts with FMN forming ureidoacrylate and FMN-N(5)-oxide. The FMN-N(5)-oxide reacts spontaneously with NADH to produce FMN. Requires the flavin reductase RutF to regenerate FMN in vivo. This Escherichia coli O150:H5 (strain SE15) protein is Pyrimidine monooxygenase RutA.